Reading from the N-terminus, the 125-residue chain is DNA-directed RNA polymerases I and III subunit RPAC2 (125 aa).

The protein belongs to the archaeal Rpo11/eukaryotic RPB11/RPC19 RNA polymerase subunit family. Component of the RNA polymerase I (Pol I) and RNA polymerase III (Pol III) complexes consisting of 14 and 17 subunits, respectively.

It localises to the nucleus. DNA-dependent RNA polymerase catalyzes the transcription of DNA into RNA using the four ribonucleoside triphosphates as substrates. Common core component of RNA polymerases I and III which synthesize ribosomal RNA precursors and small RNAs, such as 5S rRNA and tRNAs, respectively. The protein is DNA-directed RNA polymerases I and III subunit RPAC2 (rpc19) of Schizosaccharomyces pombe (strain 972 / ATCC 24843) (Fission yeast).